We begin with the raw amino-acid sequence, 577 residues long: Sulfite reductase [NADPH] hemoprotein beta-component (577 aa).

[4Fe-4S] cluster contacts are provided by Cys-440, Cys-446, Cys-486, and Cys-490. Cys-490 contacts siroheme.

Belongs to the nitrite and sulfite reductase 4Fe-4S domain family. Alpha(8)-beta(8). The alpha component is a flavoprotein, the beta component is a hemoprotein. It depends on siroheme as a cofactor. [4Fe-4S] cluster is required as a cofactor.

It catalyses the reaction hydrogen sulfide + 3 NADP(+) + 3 H2O = sulfite + 3 NADPH + 4 H(+). The protein operates within sulfur metabolism; hydrogen sulfide biosynthesis; hydrogen sulfide from sulfite (NADPH route): step 1/1. Component of the sulfite reductase complex that catalyzes the 6-electron reduction of sulfite to sulfide. This is one of several activities required for the biosynthesis of L-cysteine from sulfate. This Vibrio cholerae serotype O1 (strain ATCC 39541 / Classical Ogawa 395 / O395) protein is Sulfite reductase [NADPH] hemoprotein beta-component.